Consider the following 192-residue polypeptide: MSGVLSCVLRACACAGLCCWVCMGAICGGCQRWWRRRCARWGRVGPRVRSGDGARWVSRKCETERAPSAARSPACSPHFVLVSSSSSSSCSSACSSRPLSSPPSPRAASHAVCAAGGCDLPTHDADGDADEGTDVTLSERAGADEGAGGNAAGCPEDTRGFARSPGDLMGGMNGDLGDEGETGEGGDNGAGE.

Positions 1 to 24 are cleaved as a signal peptide; it reads MSGVLSCVLRACACAGLCCWVCMG. Positions 140-192 are disordered; sequence RAGADEGAGGNAAGCPEDTRGFARSPGDLMGGMNGDLGDEGETGEGGDNGAGE.

This is an uncharacterized protein from Human herpesvirus 6A (strain Uganda-1102) (HHV-6 variant A).